Consider the following 121-residue polypeptide: Large ribosomal subunit protein bL19 (121 aa).

Belongs to the bacterial ribosomal protein bL19 family.

In terms of biological role, this protein is located at the 30S-50S ribosomal subunit interface and may play a role in the structure and function of the aminoacyl-tRNA binding site. This Legionella pneumophila (strain Paris) protein is Large ribosomal subunit protein bL19.